A 454-amino-acid chain; its full sequence is Chromosomal replication initiator protein DnaA (454 aa).

Residues 1–79 (MSLCLWKQCL…NSPLIKFEIY (79 aa)) are domain I, interacts with DnaA modulators. The tract at residues 79–117 (YQIYKENKLKKNIENNNNNKNEKLIWSNIPKFKNLSYRS) is domain II. The interval 118–334 (NINKRYNFQN…GALNRVILNS (217 aa)) is domain III, AAA+ region. Gly162, Gly164, Lys165, and Thr166 together coordinate ATP. A domain IV, binds dsDNA region spans residues 335–454 (RFTHRAITVD…FLNLIRTLSK (120 aa)).

This sequence belongs to the DnaA family. As to quaternary structure, oligomerizes as a right-handed, spiral filament on DNA at oriC.

It is found in the cytoplasm. Plays an essential role in the initiation and regulation of chromosomal replication. ATP-DnaA binds to the origin of replication (oriC) to initiate formation of the DNA replication initiation complex once per cell cycle. Binds the DnaA box (a 9 base pair repeat at the origin) and separates the double-stranded (ds)DNA. Forms a right-handed helical filament on oriC DNA; dsDNA binds to the exterior of the filament while single-stranded (ss)DNA is stabiized in the filament's interior. The ATP-DnaA-oriC complex binds and stabilizes one strand of the AT-rich DNA unwinding element (DUE), permitting loading of DNA polymerase. After initiation quickly degrades to an ADP-DnaA complex that is not apt for DNA replication. Binds acidic phospholipids. In Buchnera aphidicola subsp. Acyrthosiphon pisum (strain 5A), this protein is Chromosomal replication initiator protein DnaA.